We begin with the raw amino-acid sequence, 190 residues long: Xanthine phosphoribosyltransferase (190 aa).

Positions 20 and 27 each coordinate xanthine. 128–132 (ANGKA) contacts 5-phospho-alpha-D-ribose 1-diphosphate. K156 provides a ligand contact to xanthine.

Belongs to the purine/pyrimidine phosphoribosyltransferase family. Xpt subfamily. In terms of assembly, homodimer.

The protein resides in the cytoplasm. The enzyme catalyses XMP + diphosphate = xanthine + 5-phospho-alpha-D-ribose 1-diphosphate. Its pathway is purine metabolism; XMP biosynthesis via salvage pathway; XMP from xanthine: step 1/1. Converts the preformed base xanthine, a product of nucleic acid breakdown, to xanthosine 5'-monophosphate (XMP), so it can be reused for RNA or DNA synthesis. This chain is Xanthine phosphoribosyltransferase, found in Pseudomonas fluorescens (strain ATCC BAA-477 / NRRL B-23932 / Pf-5).